A 294-amino-acid chain; its full sequence is Putative lipid kinase SP_1045 (294 aa).

One can recognise a DAGKc domain in the interval 1–131; the sequence is MKKAMVIINP…IDIGKANDNY (131 aa). ATP is bound by residues 9–13, Thr-40, 66–72, and Thr-93; these read NPTSG and GDGTVNE. Mg(2+) is bound by residues Asp-212 and Tyr-214. Asp-269 acts as the Proton acceptor in catalysis.

The protein belongs to the diacylglycerol/lipid kinase family. Mg(2+) serves as cofactor.

Functionally, may catalyze the ATP-dependent phosphorylation of lipids other than diacylglycerol (DAG). In fact, is not able to exhibit diacylglycerol kinase activity in vitro. The protein is Putative lipid kinase SP_1045 of Streptococcus pneumoniae serotype 4 (strain ATCC BAA-334 / TIGR4).